The sequence spans 275 residues: Small ribosomal subunit protein uS3 (275 aa).

Positions 38–106 (IRRLLSSGLE…QVQLNILEVK (69 aa)) constitute a KH type-2 domain. The disordered stretch occupies residues 217-275 (AVPAGADRPRRERPAGSRPRRSGASGTTATGTEAGRAVGSEEPAAAESATTPEAQSTES). Over residues 238 to 275 (SGASGTTATGTEAGRAVGSEEPAAAESATTPEAQSTES) the composition is skewed to low complexity.

Belongs to the universal ribosomal protein uS3 family. In terms of assembly, part of the 30S ribosomal subunit. Forms a tight complex with proteins S10 and S14.

In terms of biological role, binds the lower part of the 30S subunit head. Binds mRNA in the 70S ribosome, positioning it for translation. This chain is Small ribosomal subunit protein uS3, found in Mycobacterium marinum (strain ATCC BAA-535 / M).